The following is a 542-amino-acid chain: Dihydropyrimidinase (542 aa).

Residues His-62, His-64, and Lys-167 each coordinate Zn(2+). Lys-167 is modified (N6-carboxylysine). Substrate is bound at residue Tyr-172. Zn(2+) contacts are provided by His-199 and His-255. Ser-331 lines the substrate pocket. Asp-358 is a binding site for Zn(2+). Position 392 (Asn-392) interacts with substrate.

Belongs to the metallo-dependent hydrolases superfamily. Hydantoinase/dihydropyrimidinase family. In terms of assembly, homotetramer. Zn(2+) serves as cofactor. Post-translationally, carboxylation allows a single lysine to coordinate two zinc ions.

It catalyses the reaction 5,6-dihydrouracil + H2O = 3-(carbamoylamino)propanoate + H(+). Functionally, catalyzes the second step of the reductive pyrimidine degradation, the reversible hydrolytic ring opening of dihydropyrimidines. Can catalyze the ring opening of 5,6-dihydrouracil to N-carbamyl-alanine and of 5,6-dihydrothymine to N-carbamyl-amino isobutyrate. The sequence is that of Dihydropyrimidinase (PYD2) from Lachancea kluyveri (strain ATCC 58438 / CBS 3082 / BCRC 21498 / NBRC 1685 / JCM 7257 / NCYC 543 / NRRL Y-12651) (Yeast).